We begin with the raw amino-acid sequence, 83 residues long: ATP synthase subunit c (83 aa).

2 consecutive transmembrane segments (helical) span residues 10 to 30 (IAVA…FGLL) and 52 to 72 (MFIV…IALF).

Belongs to the ATPase C chain family. In terms of assembly, F-type ATPases have 2 components, F(1) - the catalytic core - and F(0) - the membrane proton channel. F(1) has five subunits: alpha(3), beta(3), gamma(1), delta(1), epsilon(1). F(0) has three main subunits: a(1), b(2) and c(10-14). The alpha and beta chains form an alternating ring which encloses part of the gamma chain. F(1) is attached to F(0) by a central stalk formed by the gamma and epsilon chains, while a peripheral stalk is formed by the delta and b chains.

The protein resides in the cell inner membrane. F(1)F(0) ATP synthase produces ATP from ADP in the presence of a proton or sodium gradient. F-type ATPases consist of two structural domains, F(1) containing the extramembraneous catalytic core and F(0) containing the membrane proton channel, linked together by a central stalk and a peripheral stalk. During catalysis, ATP synthesis in the catalytic domain of F(1) is coupled via a rotary mechanism of the central stalk subunits to proton translocation. Functionally, key component of the F(0) channel; it plays a direct role in translocation across the membrane. A homomeric c-ring of between 10-14 subunits forms the central stalk rotor element with the F(1) delta and epsilon subunits. The polypeptide is ATP synthase subunit c (Shewanella loihica (strain ATCC BAA-1088 / PV-4)).